Here is a 206-residue protein sequence, read N- to C-terminus: Emopamil-binding protein-like (206 aa).

The next 4 membrane-spanning stretches (helical) occupy residues 10-30 (EAGG…ALGL), 42-62 (GALI…GPFV), 101-121 (VEIL…YAIV), and 165-185 (CWLY…LLLW). In terms of domain architecture, EXPERA spans 39–184 (ADRGALIWLC…VWVLIPGLLL (146 aa)).

This sequence belongs to the EBP family. In terms of assembly, homodimer. Widely expressed with highest levels in liver, lung and kidney.

The protein localises to the endoplasmic reticulum membrane. Its function is as follows. Does not possess sterol isomerase activity and does not bind sigma ligands. The polypeptide is Emopamil-binding protein-like (EBPL) (Homo sapiens (Human)).